Reading from the N-terminus, the 570-residue chain is Proline--tRNA ligase (570 aa).

It belongs to the class-II aminoacyl-tRNA synthetase family. ProS type 1 subfamily. In terms of assembly, homodimer.

It is found in the cytoplasm. The catalysed reaction is tRNA(Pro) + L-proline + ATP = L-prolyl-tRNA(Pro) + AMP + diphosphate. Catalyzes the attachment of proline to tRNA(Pro) in a two-step reaction: proline is first activated by ATP to form Pro-AMP and then transferred to the acceptor end of tRNA(Pro). As ProRS can inadvertently accommodate and process non-cognate amino acids such as alanine and cysteine, to avoid such errors it has two additional distinct editing activities against alanine. One activity is designated as 'pretransfer' editing and involves the tRNA(Pro)-independent hydrolysis of activated Ala-AMP. The other activity is designated 'posttransfer' editing and involves deacylation of mischarged Ala-tRNA(Pro). The misacylated Cys-tRNA(Pro) is not edited by ProRS. The polypeptide is Proline--tRNA ligase (Neisseria meningitidis serogroup C / serotype 2a (strain ATCC 700532 / DSM 15464 / FAM18)).